Consider the following 398-residue polypeptide: Phospholipase C (398 aa).

Residues 1 to 28 (MKRKICKALICAALATSLWAGASTKVYA) form the signal peptide. Zn(2+)-binding residues include Trp29, His39, Asp84, His96, His154, Asp158, His164, His176, and Glu180. Residues 29-278 (WDGKIDGTGT…HDVSEGNDPS (250 aa)) enclose the Zn-dependent PLC domain. The tract at residues 275–283 (NDPSVGKNV) is linker. In terms of domain architecture, PLAT spans 284–398 (KELVAYISTS…ISGNSTYNIK (115 aa)). Residues Asp297, Gly299, Thr300, Asp301, Asp321, Asn322, Gly324, Asn325, Asp326, Asp364, and Ala365 each contribute to the Ca(2+) site.

It belongs to the bacterial zinc-metallophospholipase C family. It depends on Ca(2+) as a cofactor. The cofactor is Zn(2+).

The protein localises to the secreted. The enzyme catalyses a 1,2-diacyl-sn-glycero-3-phosphocholine + H2O = phosphocholine + a 1,2-diacyl-sn-glycerol + H(+). In terms of biological role, bacterial hemolysins are exotoxins that attack blood cell membranes and cause cell rupture. Constitutes an essential virulence factor in gas gangrene. Binds to eukaryotic membranes where it hydrolyzes both phosphatidylcholine and sphingomyelin. The diacylglycerol produced can activate both the arachidonic acid pathway, leading to modulation of the inflammatory response cascade and thrombosis, and protein kinase C, leading to activation of eukaryotic phospholipases and further membrane damage. Acts on human and mouse erythrocytes, but not on rabbit or horse erythrocytes. This is Phospholipase C (plc) from Clostridium perfringens (strain ATCC 13124 / DSM 756 / JCM 1290 / NCIMB 6125 / NCTC 8237 / Type A).